A 567-amino-acid chain; its full sequence is Protein NRT1/ PTR FAMILY 4.5 (567 aa).

Helical transmembrane passes span 30–50 (GMLAASFVLAVEILENLAFLA), 70–92 (SSSEVTTFMATAFLLALLGGFLA), 99–118 (FVIFLISASIEFLGLILLTI), 147–167 (AFLFVGLYLVSLGIGGIKGSL), 189–209 (FFNYYVFCLSCGALVAVTFVV), 219–239 (WGFGVSTISIFLSILVFLLGS), 326–346 (IVLKMLPIFGCTIMLNCCLAQ), 374–394 (VFPVVFMLILAPTYDHLIIPF), 411–431 (IGVGLVLSIVAMAVAALVELK), 448–468 (LPITFLWIALQYLFLGSADLF), 491–511 (SLSWASLALGYYLSSVMVPIV), and 535–555 (LFYWLMCVLSVVNFLHYLFWA).

This sequence belongs to the major facilitator superfamily. Proton-dependent oligopeptide transporter (POT/PTR) (TC 2.A.17) family. In terms of tissue distribution, expressed in flowers and siliques.

It is found in the membrane. Its function is as follows. Involved in abscisic acid transport. This chain is Protein NRT1/ PTR FAMILY 4.5 (NPF4.5), found in Arabidopsis thaliana (Mouse-ear cress).